A 431-amino-acid polypeptide reads, in one-letter code: Tol-Pal system protein TolB (431 aa).

An N-terminal signal peptide occupies residues 1 to 26 (MRLMTKLGFRALVASCLIAAGGAANA). Residues 411–431 (PQILSVQGGSVREPSWGPFMQ) form a disordered region.

The protein belongs to the TolB family. The Tol-Pal system is composed of five core proteins: the inner membrane proteins TolA, TolQ and TolR, the periplasmic protein TolB and the outer membrane protein Pal. They form a network linking the inner and outer membranes and the peptidoglycan layer.

Its subcellular location is the periplasm. Its function is as follows. Part of the Tol-Pal system, which plays a role in outer membrane invagination during cell division and is important for maintaining outer membrane integrity. The protein is Tol-Pal system protein TolB of Burkholderia ambifaria (strain MC40-6).